We begin with the raw amino-acid sequence, 89 residues long: Small ribosomal subunit protein uS15 (89 aa).

Over residues 1–10 (MSITAERKAE) the composition is skewed to basic and acidic residues. Residues 1–24 (MSITAERKAEVIQGNANKAGDTGS) form a disordered region.

The protein belongs to the universal ribosomal protein uS15 family. In terms of assembly, part of the 30S ribosomal subunit. Forms a bridge to the 50S subunit in the 70S ribosome, contacting the 23S rRNA.

In terms of biological role, one of the primary rRNA binding proteins, it binds directly to 16S rRNA where it helps nucleate assembly of the platform of the 30S subunit by binding and bridging several RNA helices of the 16S rRNA. Functionally, forms an intersubunit bridge (bridge B4) with the 23S rRNA of the 50S subunit in the ribosome. This Rhodopseudomonas palustris (strain BisB5) protein is Small ribosomal subunit protein uS15.